Reading from the N-terminus, the 150-residue chain is Small ribosomal subunit protein uS11 (150 aa).

A disordered region spans residues 126 to 150 (GRIEDVTPTPSDSTRRKGGRRGRRL). Residues 141 to 150 (RKGGRRGRRL) show a composition bias toward basic residues.

Belongs to the universal ribosomal protein uS11 family. In terms of assembly, component of the small ribosomal subunit (SSU). Mature N.crassa ribosomes consist of a small (40S) and a large (60S) subunit. The 40S small subunit contains 1 molecule of ribosomal RNA (18S rRNA) and at least 32 different proteins. The large 60S subunit contains 3 rRNA molecules (26S, 5.8S and 5S rRNA) and at least 42 different proteins.

Its subcellular location is the cytoplasm. Its function is as follows. Component of the ribosome, a large ribonucleoprotein complex responsible for the synthesis of proteins in the cell. The small ribosomal subunit (SSU) binds messenger RNAs (mRNAs) and translates the encoded message by selecting cognate aminoacyl-transfer RNA (tRNA) molecules. The large subunit (LSU) contains the ribosomal catalytic site termed the peptidyl transferase center (PTC), which catalyzes the formation of peptide bonds, thereby polymerizing the amino acids delivered by tRNAs into a polypeptide chain. The nascent polypeptides leave the ribosome through a tunnel in the LSU and interact with protein factors that function in enzymatic processing, targeting, and the membrane insertion of nascent chains at the exit of the ribosomal tunnel. uS11 is involved in nucleolar processing of pre-18S ribosomal RNA and ribosome assembly. In Neurospora crassa (strain ATCC 24698 / 74-OR23-1A / CBS 708.71 / DSM 1257 / FGSC 987), this protein is Small ribosomal subunit protein uS11 (rps-14).